The chain runs to 25 residues: Small ribosomal subunit protein eS32 (25 aa).

The segment at 1 to 25 (MRAKWRKKRVRRLKRKRRKTRARSK) is disordered.

The protein belongs to the eukaryotic ribosomal protein eS32 family. In terms of assembly, component of the small ribosomal subunit.

The chain is Small ribosomal subunit protein eS32 (RPL41) from Quercus suber (Cork oak).